The primary structure comprises 128 residues: Large ribosomal subunit protein mL51 (128 aa).

The N-terminal 31 residues, 1 to 31, are a transit peptide targeting the mitochondrion; the sequence is MAGNLLSGAGRRLWDWVPLACRSFSLGVPRL.

It belongs to the mitochondrion-specific ribosomal protein mL51 family. In terms of assembly, component of the mitochondrial large ribosomal subunit (mt-LSU). Mature mammalian 55S mitochondrial ribosomes consist of a small (28S) and a large (39S) subunit. The 28S small subunit contains a 12S ribosomal RNA (12S mt-rRNA) and 30 different proteins. The 39S large subunit contains a 16S rRNA (16S mt-rRNA), a copy of mitochondrial valine transfer RNA (mt-tRNA(Val)), which plays an integral structural role, and 52 different proteins. Interacts with OXA1L.

Its subcellular location is the mitochondrion. In Homo sapiens (Human), this protein is Large ribosomal subunit protein mL51 (MRPL51).